We begin with the raw amino-acid sequence, 122 residues long: Large ribosomal subunit protein uL14 (122 aa).

The protein belongs to the universal ribosomal protein uL14 family. In terms of assembly, part of the 50S ribosomal subunit. Forms a cluster with proteins L3 and L19. In the 70S ribosome, L14 and L19 interact and together make contacts with the 16S rRNA in bridges B5 and B8.

Its function is as follows. Binds to 23S rRNA. Forms part of two intersubunit bridges in the 70S ribosome. The chain is Large ribosomal subunit protein uL14 from Caulobacter vibrioides (strain ATCC 19089 / CIP 103742 / CB 15) (Caulobacter crescentus).